The sequence spans 494 residues: NADPH:adrenodoxin oxidoreductase, mitochondrial (494 aa).

The transit peptide at 1 to 34 (MAPRCWRWWSWSAWPGVRPLPSRSTPTPGFCKKF) directs the protein to the mitochondrion. FAD is bound by residues Ala-51, Glu-72, Leu-80, and Val-116. Residues 187-190 (QGNV), 231-232 (RR), and Glu-243 contribute to the NADP(+) site. Position 313 is a phosphoserine (Ser-313). FAD-binding positions include Trp-401 and 408–410 (GVI). Position 408 (Gly-408) interacts with NADP(+).

It belongs to the ferredoxin--NADP reductase type 1 family. Monomer. Interacts directly with FDX1. FAD serves as cofactor.

It is found in the mitochondrion inner membrane. The catalysed reaction is 2 reduced [adrenodoxin] + NADP(+) + H(+) = 2 oxidized [adrenodoxin] + NADPH. It catalyses the reaction 2 reduced [2Fe-2S]-[ferredoxin] + NADP(+) + H(+) = 2 oxidized [2Fe-2S]-[ferredoxin] + NADPH. It participates in steroid metabolism; cholesterol metabolism. In terms of biological role, serves as the first electron transfer protein in all the mitochondrial P450 systems including cholesterol side chain cleavage in all steroidogenic tissues, steroid 11-beta hydroxylation in the adrenal cortex, 25-OH-vitamin D3-24 hydroxylation in the kidney, and sterol C-27 hydroxylation in the liver. Also acts as a ferredoxin--NADP(+) reductase essential for coenzyme Q biosynthesis: together with FDX2, transfers the electrons required for the hydroxylation reaction performed by COQ6. The polypeptide is NADPH:adrenodoxin oxidoreductase, mitochondrial (Fdxr) (Rattus norvegicus (Rat)).